Reading from the N-terminus, the 336-residue chain is Tetraacyldisaccharide 4'-kinase (336 aa).

60-67 is an ATP binding site; it reads TVGGTGKT.

The protein belongs to the LpxK family.

It carries out the reaction a lipid A disaccharide + ATP = a lipid IVA + ADP + H(+). The protein operates within glycolipid biosynthesis; lipid IV(A) biosynthesis; lipid IV(A) from (3R)-3-hydroxytetradecanoyl-[acyl-carrier-protein] and UDP-N-acetyl-alpha-D-glucosamine: step 6/6. Transfers the gamma-phosphate of ATP to the 4'-position of a tetraacyldisaccharide 1-phosphate intermediate (termed DS-1-P) to form tetraacyldisaccharide 1,4'-bis-phosphate (lipid IVA). The sequence is that of Tetraacyldisaccharide 4'-kinase from Pseudomonas entomophila (strain L48).